The primary structure comprises 214 residues: MASVSPLAKFKLVFLGDQSVGKTSIITRFMYDKFDTTYQPTIGIDFLSKTMYLEDRTVRLQLWDTAGQERFRSLIPSYIRDSSVAIVVYDVSNRQTFLNTSKWIEDVHRERGQSNVIIVLVGNKTDLVEKRQVSISEGEDKGKEYGVMFIETSAKENFNIKALFRKIAAALPGVDSYSLATKSDDMVDVNLKTTSNSSQGEQQGGAGGGGGCSC.

Residue 16-23 coordinates GTP; the sequence is GDQSVGKT. The short motif at 38–46 is the Effector region element; the sequence is YQPTIGIDF. GTP is bound by residues 64-68, 123-126, and 153-154; these read DTAGQ, NKTD, and SA. Positions 194 to 214 are disordered; the sequence is TSNSSQGEQQGGAGGGGGCSC. Positions 202–214 are enriched in gly residues; sequence QQGGAGGGGGCSC. Residues C212 and C214 are each lipidated (S-geranylgeranyl cysteine). A Cysteine methyl ester modification is found at C214.

The protein belongs to the small GTPase superfamily. Rab family. As to quaternary structure, interacts with the C-terminus of GC5, but not with GC3.

It is found in the golgi apparatus membrane. The protein resides in the cytoplasm. The protein localises to the cytosol. Its function is as follows. Protein transport. Regulator of membrane traffic from the Golgi apparatus towards the endoplasmic reticulum (ER). The protein is Ras-related protein RABH1c (RABH1C) of Arabidopsis thaliana (Mouse-ear cress).